A 447-amino-acid polypeptide reads, in one-letter code: Argininosuccinate synthase (447 aa).

Residues 17 to 25 and Ala-43 each bind ATP; that span reads AFSGGLDTS. Tyr-99 serves as a coordination point for L-citrulline. Residues Gly-129 and Thr-131 each contribute to the ATP site. The L-aspartate site is built by Thr-131, Asn-135, and Asp-136. Residue Asn-135 participates in L-citrulline binding. Asp-136 contributes to the ATP binding site. L-citrulline contacts are provided by Arg-139 and Ser-192. ATP is bound at residue Asp-194. Positions 201, 203, and 280 each coordinate L-citrulline.

Belongs to the argininosuccinate synthase family. Type 2 subfamily. Homotetramer.

Its subcellular location is the cytoplasm. The catalysed reaction is L-citrulline + L-aspartate + ATP = 2-(N(omega)-L-arginino)succinate + AMP + diphosphate + H(+). It participates in amino-acid biosynthesis; L-arginine biosynthesis; L-arginine from L-ornithine and carbamoyl phosphate: step 2/3. In Shigella boydii serotype 18 (strain CDC 3083-94 / BS512), this protein is Argininosuccinate synthase.